The sequence spans 699 residues: 1,4-alpha-glucan-branching enzyme (699 aa).

Substrate is bound by residues 59-60 (NE) and 88-90 (WAP). Tryptophan 104 serves as a coordination point for (1,4-alpha-D-glucosyl)n. 115–118 (DYGK) contributes to the substrate binding site. Residue lysine 140 coordinates (1,4-alpha-D-glucosyl)n. A Phosphotyrosine modification is found at tyrosine 170. Position 330–333 (330–333 (EVLR)) interacts with substrate. The active-site Nucleophile is the aspartate 354. The Proton donor role is filled by glutamate 409.

It belongs to the glycosyl hydrolase 13 family. GlgB subfamily. In terms of assembly, monomer.

It carries out the reaction Transfers a segment of a (1-&gt;4)-alpha-D-glucan chain to a primary hydroxy group in a similar glucan chain.. It participates in glycan biosynthesis; glycogen biosynthesis. Its function is as follows. Glycogen-branching enzyme participates in the glycogen biosynthetic process along with glycogenin and glycogen synthase. Generates alpha-1,6-glucosidic branches from alpha-1,4-linked glucose chains, to increase solubility of the glycogen polymer. The sequence is that of 1,4-alpha-glucan-branching enzyme (GBE1) from Equus caballus (Horse).